The sequence spans 54 residues: 2-aminomuconate deaminase (54 aa).

Homohexamer.

It carries out the reaction (2Z,4E)-2-aminomuconate + H2O = (3E)-2-oxohex-3-enedioate + NH4(+). The protein operates within xenobiotic degradation; nitrobenzene degradation. Its function is as follows. Converts 2-aminomuconate to 4-oxalocrotonate, an intermediate step in the biodegradation of nitrobenzene. The sequence is that of 2-aminomuconate deaminase from Ectopseudomonas oleovorans (Pseudomonas oleovorans).